Here is a 334-residue protein sequence, read N- to C-terminus: DNA polymerase beta (334 aa).

K(+) is bound by residues K60, L62, and V65. Residues K60, L62, and V65 each coordinate Na(+). Residue K72 is the Nucleophile; Schiff-base intermediate with DNA; for 5'-dRP lyase activity of the active site. Omega-N-methylarginine; by PRMT6 is present on R83. Residues T101, V103, and I106 each coordinate K(+). Residues T101, V103, and I106 each coordinate Na(+). A 2'-deoxyribonucleoside 5'-triphosphate is bound at residue R149. R152 bears the Omega-N-methylarginine; by PRMT6 mark. Positions 180, 183, 189, and 190 each coordinate a 2'-deoxyribonucleoside 5'-triphosphate. The tract at residues 183–192 (RGAESSGDMD) is DNA-binding. Residues D190, D192, and D255 each coordinate Mg(2+).

This sequence belongs to the DNA polymerase type-X family. Monomer. It depends on Mg(2+) as a cofactor. Methylation by PRMT6 stimulates the polymerase activity by enhancing DNA binding and processivity. In terms of processing, ubiquitinated: monoubiquitinated by huwe1/arf-bp1. Monoubiquitinated protein is then the target of stub1/chip, which catalyzes polyubiquitination from monoubiquitin, leading to degradation by the proteasome. usp47 mediates the deubiquitination of monoubiquitinated protein, preventing polyubiquitination by STUB1/CHIP and its subsequent degradation.

The protein localises to the nucleus. It is found in the cytoplasm. It carries out the reaction DNA(n) + a 2'-deoxyribonucleoside 5'-triphosphate = DNA(n+1) + diphosphate. The catalysed reaction is a 5'-end 2'-deoxyribose-2'-deoxyribonucleotide-DNA = (2E,4S)-4-hydroxypenten-2-al-5-phosphate + a 5'-end 5'-phospho-2'-deoxyribonucleoside-DNA + H(+). It catalyses the reaction 2'-deoxyribonucleotide-(2'-deoxyribose 5'-phosphate)-2'-deoxyribonucleotide-DNA = a 3'-end 2'-deoxyribonucleotide-(2,3-dehydro-2,3-deoxyribose 5'-phosphate)-DNA + a 5'-end 5'-phospho-2'-deoxyribonucleoside-DNA + H(+). In terms of biological role, repair polymerase that plays a key role in base-excision repair. During this process, the damaged base is excised by specific DNA glycosylases, the DNA backbone is nicked at the abasic site by an apurinic/apyrimidic (AP) endonuclease, and POLB removes 5'-deoxyribose-phosphate from the preincised AP site acting as a 5'-deoxyribose-phosphate lyase (5'-dRP lyase); through its DNA polymerase activity, it adds one nucleotide to the 3' end of the arising single-nucleotide gap. Conducts 'gap-filling' DNA synthesis in a stepwise distributive fashion rather than in a processive fashion as for other DNA polymerases. It is also able to cleave sugar-phosphate bonds 3' to an intact AP site, acting as an AP lyase. In Xenopus laevis (African clawed frog), this protein is DNA polymerase beta (polb).